A 136-amino-acid chain; its full sequence is uncharacterized protein (136 aa).

Residues 7-27 (ANVLAILLVSLFLINGLVFLS) traverse the membrane as a helical segment.

It is found in the membrane. This is an uncharacterized protein from Mycoplasma pneumoniae (strain ATCC 29342 / M129 / Subtype 1) (Mycoplasmoides pneumoniae).